Consider the following 295-residue polypeptide: UDP-N-acetylenolpyruvoylglucosamine reductase (295 aa).

An FAD-binding PCMH-type domain is found at 23-188 (QVGGPADFLA…ISAKFALKPG (166 aa)). The active site involves Arg-167. The active-site Proton donor is Ser-217. Glu-287 is an active-site residue.

The protein belongs to the MurB family. It depends on FAD as a cofactor.

Its subcellular location is the cytoplasm. It catalyses the reaction UDP-N-acetyl-alpha-D-muramate + NADP(+) = UDP-N-acetyl-3-O-(1-carboxyvinyl)-alpha-D-glucosamine + NADPH + H(+). Its pathway is cell wall biogenesis; peptidoglycan biosynthesis. Its function is as follows. Cell wall formation. This is UDP-N-acetylenolpyruvoylglucosamine reductase from Streptococcus equi subsp. zooepidemicus (strain H70).